Here is a 350-residue protein sequence, read N- to C-terminus: Ion-translocating oxidoreductase complex subunit D (350 aa).

Helical transmembrane passes span 36–56 (CYFFGWGTLIQIALAIAIAVA), 89–109 (IPALAPWWIAAIGVIFAILVV), and 124–144 (AMAAYVMLLISFPMQMTTWVA). Threonine 185 carries the post-translational modification FMN phosphoryl threonine. 5 consecutive transmembrane segments (helical) span residues 212 to 232 (GFGIGWALINLAYLAGGLVML), 239 to 259 (WQISTAILASLFVCASIGYLL), 265 to 285 (MGPLLHLFSGATMLAAFFIAT), 298 to 318 (LIFGSLIGLLVYLIRSFCGYP), and 319 to 339 (DAFAFAVLLANLCAPFIDYYV).

It belongs to the NqrB/RnfD family. As to quaternary structure, the complex is composed of six subunits: RnfA, RnfB, RnfC, RnfD, RnfE and RnfG. FMN is required as a cofactor.

It localises to the cell inner membrane. Functionally, part of a membrane-bound complex that couples electron transfer with translocation of ions across the membrane. This Shewanella loihica (strain ATCC BAA-1088 / PV-4) protein is Ion-translocating oxidoreductase complex subunit D.